Consider the following 201-residue polypeptide: Dephospho-CoA kinase (201 aa).

The DPCK domain occupies 3 to 201 (WIGLTGGIAC…KWLEELKNQN (199 aa)). 11 to 16 (ACGKST) is a binding site for ATP.

The protein belongs to the CoaE family.

It is found in the cytoplasm. It catalyses the reaction 3'-dephospho-CoA + ATP = ADP + CoA + H(+). It participates in cofactor biosynthesis; coenzyme A biosynthesis; CoA from (R)-pantothenate: step 5/5. Catalyzes the phosphorylation of the 3'-hydroxyl group of dephosphocoenzyme A to form coenzyme A. In Bdellovibrio bacteriovorus (strain ATCC 15356 / DSM 50701 / NCIMB 9529 / HD100), this protein is Dephospho-CoA kinase.